Reading from the N-terminus, the 101-residue chain is Small ubiquitin-related modifier 5 (101 aa).

A Required for PML-NB formation motif is present at residues 17 to 21; it reads IKDED. A Glycyl lysine isopeptide (Lys-Gly) (interchain with G-Cter in SUMO1P1/SUMO5) cross-link involves residue Lys-18. Residues 20-97 form the Ubiquitin-like domain; the sequence is EDIKLRVIGQ…IEVYQEQIGG (78 aa). Gly-97 is covalently cross-linked (Glycyl lysine isopeptide (Gly-Lys) (interchain with K-? in acceptor proteins)). Positions 98 to 101 are excised as a propeptide; that stretch reads HSTV.

Belongs to the ubiquitin family. SUMO subfamily. In terms of assembly, interacts with CBX4. Interacts with PIAS1. Found in a complex with SAE2. Interacts with UBE2I. Interacts with SP100. Interacts with HIPK2. Interacts with DAXX. Interacts with PML-RARA oncoprotein; PML-RARalpha outcompetes PML for SUMO1P1/SUMO5 conjugation. Cleavage of precursor form is necessary for function. Post-translationally, autosumoylated at Lys-18. As to expression, high expression levels in testes and peripheral blood leukocyte. Expressed also in lung, placenta, liver, spleen and thymus.

Its subcellular location is the nucleus. Ubiquitin-like protein that can be covalently attached to proteins as a monomer or as a lysine-linked polymer. Regulates the life cycle of promyelocytic leukemia nuclear bodies (PML-NBs). PolySUMO1P1/SUMO5 conjugation on 'Lys-160' of PML facilitates recruitment of PML-NB components, which enlarges PML-NB. SUMO1P1/SUMO5 also increases polySUMO2/3 conjugation of PML, resulting in RNF4-mediated disruption of PML-NBs. The sequence is that of Small ubiquitin-related modifier 5 from Homo sapiens (Human).